Here is a 115-residue protein sequence, read N- to C-terminus: NADH-ubiquinone oxidoreductase chain 3 (115 aa).

3 helical membrane passes run 3 to 23 (FVLI…ITFW), 55 to 75 (FFLV…LLPL), and 84 to 104 (LPLM…SLAY).

It belongs to the complex I subunit 3 family. Core subunit of respiratory chain NADH dehydrogenase (Complex I) which is composed of 45 different subunits. Interacts with TMEM186. Interacts with TMEM242.

It is found in the mitochondrion inner membrane. The enzyme catalyses a ubiquinone + NADH + 5 H(+)(in) = a ubiquinol + NAD(+) + 4 H(+)(out). Its function is as follows. Core subunit of the mitochondrial membrane respiratory chain NADH dehydrogenase (Complex I) which catalyzes electron transfer from NADH through the respiratory chain, using ubiquinone as an electron acceptor. Essential for the catalytic activity of complex I. The chain is NADH-ubiquinone oxidoreductase chain 3 from Pan troglodytes (Chimpanzee).